Reading from the N-terminus, the 167-residue chain is Homeobox protein EgHBX3 (167 aa).

The homeobox DNA-binding region spans 80–139 (SQSKRRVLFNKFQISQLEKRLKQRYLTAQERQELAHTIGLTPTQVKIWFQNHAYKMKRLF).

It belongs to the NK-2 homeobox family.

The protein localises to the nucleus. The polypeptide is Homeobox protein EgHBX3 (HBX3) (Echinococcus granulosus (Hydatid tapeworm)).